The following is a 249-amino-acid chain: Tabinhibitin 4 (249 aa).

The signal sequence occupies residues Met1–Thr23. Residues Arg31 to Asp33 carry the Cell attachment site motif. Residues Leu64–Phe207 enclose the SCP domain. The short motif at Arg220–Asp222 is the Cell attachment site element.

The protein belongs to the CRISP family. In terms of tissue distribution, expressed in salivary glands.

It is found in the secreted. Its function is as follows. Inhibits platelet aggregation induced by all agonists tested (ADP, arachidonic acid, the thromboxane A2 analog U46619, thrombin, and snake venom snaclecs (TMVA that activates platelet through GPIB, and stejnulxin that specifically acts through GPVI (GP6))). May act by competing with fibrinogen for binding to glycoprotein IIb/IIIa (ITGA2B/ITGB3). The chain is Tabinhibitin 4 from Tabanus yao (Horsefly).